The sequence spans 949 residues: L-fucokinase/L-fucose-1-P guanylyltransferase (949 aa).

A fucose-1-phosphate guanylyltransferase region spans residues 25–191; sequence DWFCTSDPVG…DFMLQKPSLA (167 aa). The tract at residues 559 to 949 is L-fucokinase; the sequence is LLRDGLLDGI…SDKGFQVSRS (391 aa).

It belongs to the GHMP kinase family. As to quaternary structure, homotetramer. The cofactor is Mn(2+). Mg(2+) serves as cofactor.

The enzyme catalyses L-fucose + ATP = beta-L-fucose 1-phosphate + ADP + H(+). The catalysed reaction is beta-L-fucose 1-phosphate + GTP + H(+) = GDP-beta-L-fucose + diphosphate. Its function is as follows. Bifunctional enzyme involved in the salvage pathway of GDP-fucose synthesis. Catalyzes two successive reactions, the ATP-dependent phosphorylation of L-fucose to L-fucose 1-phosphate, and its guanylylation to GDP-L-fucose. GDP-fucose is an important fucose donor in the process of fucosylated oligosaccharides formation. The polypeptide is L-fucokinase/L-fucose-1-P guanylyltransferase (Bacteroides fragilis).